Consider the following 142-residue polypeptide: Cell division protein SepF (142 aa).

Acidic residues predominate over residues 21–31 (ETTTVEEEREE). The segment at 21–46 (ETTTVEEEREEQESSHKRQPAISRTN) is disordered.

This sequence belongs to the SepF family. Homodimer. Interacts with FtsZ.

The protein resides in the cytoplasm. Cell division protein that is part of the divisome complex and is recruited early to the Z-ring. Probably stimulates Z-ring formation, perhaps through the cross-linking of FtsZ protofilaments. Its function overlaps with FtsA. The polypeptide is Cell division protein SepF (Brevibacillus brevis (strain 47 / JCM 6285 / NBRC 100599)).